The sequence spans 436 residues: MDYTTQMDAAKKNVTTKEMEVVAEKEQMEISELKMLMAEGKIVIPANKNHKSLSAEGVGQGLKTKINVNLGISKDCQNVDMEMKKVEIAIAMKAEAIMDLSSFGKTEEFRKKLINMSKAMIGTVPIYDAIGFYDKELKDITAEEMIGVVEKQAKEGVDFMTIHAGINRETAETFKRNKRAMNIVSRGGSLLYAWMELNNKENPFYEYYDKILDICEKYDVTISLGDACRPGCIDDSTDASQITELIKLGELTKRAWDRNVQVMVEGPGHMALNEIQSNMIIEKKLCHGAPFYVLGPIVTDIAPGYDHITSAIGGAVAAASGADFLCYVTPAEHLRLPNIEDMKEGIVASKIAAHAADIAKNVKGARDWDNKMAEARQKLDWKAMFDLSIDPEKAIRYRKESTPEDPDTCTMCGKMCSVRNMNKVMAGKDVNILRED.

Residues Asn69, Met98, Tyr127, His163, 185–187 (SRG), 226–229 (DACR), and Glu265 contribute to the substrate site. His269 contacts Zn(2+). Tyr292 is a substrate binding site. His333 lines the Zn(2+) pocket. Cys409, Cys412, and Cys416 together coordinate [4Fe-4S] cluster.

The protein belongs to the ThiC family. [4Fe-4S] cluster serves as cofactor.

The enzyme catalyses 5-amino-1-(5-phospho-beta-D-ribosyl)imidazole + S-adenosyl-L-methionine = 4-amino-2-methyl-5-(phosphooxymethyl)pyrimidine + CO + 5'-deoxyadenosine + formate + L-methionine + 3 H(+). The protein operates within cofactor biosynthesis; thiamine diphosphate biosynthesis. Functionally, catalyzes the synthesis of the hydroxymethylpyrimidine phosphate (HMP-P) moiety of thiamine from aminoimidazole ribotide (AIR) in a radical S-adenosyl-L-methionine (SAM)-dependent reaction. This is Phosphomethylpyrimidine synthase from Clostridium acetobutylicum (strain ATCC 824 / DSM 792 / JCM 1419 / IAM 19013 / LMG 5710 / NBRC 13948 / NRRL B-527 / VKM B-1787 / 2291 / W).